A 317-amino-acid chain; its full sequence is Serine/threonine-protein phosphatase PP1 isozyme 1 (317 aa).

Mn(2+) is bound by residues Asp-75, His-77, Asp-103, and Asn-135. His-136 functions as the Proton donor in the catalytic mechanism. The Mn(2+) site is built by His-184 and His-259.

This sequence belongs to the PPP phosphatase family. PP-1 subfamily. Mn(2+) serves as cofactor.

The catalysed reaction is O-phospho-L-seryl-[protein] + H2O = L-seryl-[protein] + phosphate. The enzyme catalyses O-phospho-L-threonyl-[protein] + H2O = L-threonyl-[protein] + phosphate. The sequence is that of Serine/threonine-protein phosphatase PP1 isozyme 1 (NPP1) from Nicotiana tabacum (Common tobacco).